The primary structure comprises 209 residues: Outer-membrane lipoprotein LolB (209 aa).

Positions 1–17 (MKKSTLLFSLMAMALSG) are cleaved as a signal peptide. A lipid anchor (N-palmitoyl cysteine) is attached at C18. Residue C18 is the site of S-diacylglycerol cysteine attachment.

The protein belongs to the LolB family. Monomer.

The protein resides in the cell outer membrane. Plays a critical role in the incorporation of lipoproteins in the outer membrane after they are released by the LolA protein. This chain is Outer-membrane lipoprotein LolB, found in Haemophilus ducreyi (strain 35000HP / ATCC 700724).